The chain runs to 470 residues: Neuraminidase (470 aa).

The Intravirion segment spans residues Met-1–Ser-14. Positions Gly-11 to Thr-32 are involved in apical transport and lipid raft association. Residues Leu-15–Val-35 traverse the membrane as a helical segment. Residues Thr-32–Thr-86 form a hypervariable stalk region region. Over Leu-36–Ile-470 the chain is Virion surface. N-linked (GlcNAc...) asparagine; by host glycosylation is found at Asn-39, Asn-46, Asn-54, and Asn-84. The interval Leu-89–Ile-470 is head of neuraminidase. 8 cysteine pairs are disulfide-bonded: Cys-90–Cys-417, Cys-122–Cys-127, Cys-182–Cys-229, Cys-231–Cys-236, Cys-277–Cys-290, Cys-279–Cys-288, Cys-316–Cys-335, and Cys-421–Cys-446. Arg-116 serves as a coordination point for substrate. N-linked (GlcNAc...) asparagine; by host glycosylation is present at Asn-144. Residue Asp-149 is the Proton donor/acceptor of the active site. Substrate is bound at residue Arg-150. Glu-275–Glu-276 lines the substrate pocket. Arg-291 provides a ligand contact to substrate. Ca(2+) is bound at residue Asp-292. A glycan (N-linked (GlcNAc...) asparagine; by host) is linked at Asn-293. Ca(2+)-binding residues include Gly-296 and Asp-322. Substrate is bound at residue Arg-368. N-linked (GlcNAc...) asparagine; by host glycosylation is present at Asn-398. Tyr-402 acts as the Nucleophile in catalysis.

This sequence belongs to the glycosyl hydrolase 34 family. Homotetramer. The cofactor is Ca(2+). In terms of processing, N-glycosylated.

It localises to the virion membrane. Its subcellular location is the host apical cell membrane. The catalysed reaction is Hydrolysis of alpha-(2-&gt;3)-, alpha-(2-&gt;6)-, alpha-(2-&gt;8)- glycosidic linkages of terminal sialic acid residues in oligosaccharides, glycoproteins, glycolipids, colominic acid and synthetic substrates.. Inhibited by the neuraminidase inhibitors zanamivir (Relenza) and oseltamivir (Tamiflu). These drugs interfere with the release of progeny virus from infected cells and are effective against all influenza strains. Resistance to neuraminidase inhibitors is quite rare. Functionally, catalyzes the removal of terminal sialic acid residues from viral and cellular glycoconjugates. Cleaves off the terminal sialic acids on the glycosylated HA during virus budding to facilitate virus release. Additionally helps virus spread through the circulation by further removing sialic acids from the cell surface. These cleavages prevent self-aggregation and ensure the efficient spread of the progeny virus from cell to cell. Otherwise, infection would be limited to one round of replication. Described as a receptor-destroying enzyme because it cleaves a terminal sialic acid from the cellular receptors. May facilitate viral invasion of the upper airways by cleaving the sialic acid moieties on the mucin of the airway epithelial cells. Likely to plays a role in the budding process through its association with lipid rafts during intracellular transport. May additionally display a raft-association independent effect on budding. Plays a role in the determination of host range restriction on replication and virulence. Sialidase activity in late endosome/lysosome traffic seems to enhance virus replication. The sequence is that of Neuraminidase from Influenza A virus (strain A/Equine/Kentucky/1/1981).